The chain runs to 740 residues: Zinc finger CCCH domain-containing protein 14 (740 aa).

Disordered stretches follow at residues 82–240 (SNKQ…NIKG), 254–314 (VSAG…DDAV), 390–426 (ITPSRDSTPTDDSPTMQKWNGQIEIGDDSEESEDDEE), and 444–469 (SFRDEEDELPPTHQLSGGPYAYHHST). Basic and acidic residues-rich tracts occupy residues 87–158 (ETSK…EIQR) and 176–185 (EHVRARGEKH). Residues 186–200 (DRHHHKDHRRGRSHE) are compositionally biased toward basic residues. The span at 204–214 (ITSTIVRQASA) shows a compositional bias: polar residues. The span at 393 to 409 (SRDSTPTDDSPTMQKWN) shows a compositional bias: polar residues. A compositionally biased stretch (acidic residues) spans 414-426 (IGDDSEESEDDEE). C3H1-type zinc fingers lie at residues 499–522 (HVKERCIFWPKCTKGDTCAFMHPT) and 523–543 (TNCKNFPNCTFGIRCLFIHPP). Positions 623-661 (IKKKPAPGAESEKKEEKSDENESKAEEPKAEVAPVQPKP) are disordered. A compositionally biased stretch (basic and acidic residues) spans 632-652 (ESEKKEEKSDENESKAEEPKA). 3 C3H1-type zinc fingers span residues 668 to 691 (LHSMVLCRYAGACRNPICHFKHPK), 674 to 691 (CRYAGACRNPICHFKHPK), and 693 to 709 (CRFGANCRNPSCYFYHK).

Belongs to the ZC3H14 family.

Its subcellular location is the nucleus. The protein localises to the cytoplasm. RNA-binding protein involved in the biogenesis of circular RNAs (circRNAs), which are produced by back-splicing circularization of pre-mRNAs. This chain is Zinc finger CCCH domain-containing protein 14 (sut-2), found in Caenorhabditis elegans.